Consider the following 520-residue polypeptide: Bifunctional dihydrofolate reductase-thymidylate synthase (520 aa).

Residues 26 to 229 form the DHFR domain; it reads AFSIVVALDM…LEFEICKYVP (204 aa). Val-30 contributes to the substrate binding site. Residues Ala-32 and 38 to 44 each bind NADP(+); that span reads GIGDGES. Position 52 (Asp-52) interacts with substrate. NADP(+) is bound by residues 81–83, 102–105, and 157–164; these read RKT, LSSK, and GGAQVYAD. Substrate is bound by residues Tyr-162 and Thr-180. The interval 234–520 is thymidylate synthase; the sequence is ERQYLELIDR…HPAIKMEMAV (287 aa). Arg-254 lines the dUMP pocket. Cys-400 is a catalytic residue. Residues His-401, 421–425, Asn-433, and 463–465 each bind dUMP; these read QRSCD and HVY.

This sequence in the N-terminal section; belongs to the dihydrofolate reductase family. It in the C-terminal section; belongs to the thymidylate synthase family.

It catalyses the reaction (6S)-5,6,7,8-tetrahydrofolate + NADP(+) = 7,8-dihydrofolate + NADPH + H(+). It carries out the reaction dUMP + (6R)-5,10-methylene-5,6,7,8-tetrahydrofolate = 7,8-dihydrofolate + dTMP. Its pathway is cofactor biosynthesis; tetrahydrofolate biosynthesis; 5,6,7,8-tetrahydrofolate from 7,8-dihydrofolate: step 1/1. Functionally, bifunctional enzyme. Involved in de novo dTMP biosynthesis. Key enzyme in folate metabolism. Catalyzes an essential reaction for de novo glycine and purine synthesis, DNA precursor synthesis, and for the conversion of dUMP to dTMP. The sequence is that of Bifunctional dihydrofolate reductase-thymidylate synthase from Leishmania major.